Here is a 284-residue protein sequence, read N- to C-terminus: Diaminopimelate epimerase (284 aa).

Substrate contacts are provided by N14 and N67. Catalysis depends on C76, which acts as the Proton donor. Residues 77-78 (GN), N166, N199, and 217-218 (ER) each bind substrate. Residue C226 is the Proton acceptor of the active site. 227–228 (GT) serves as a coordination point for substrate.

The protein belongs to the diaminopimelate epimerase family. In terms of assembly, homodimer.

It is found in the cytoplasm. It catalyses the reaction (2S,6S)-2,6-diaminopimelate = meso-2,6-diaminopimelate. It functions in the pathway amino-acid biosynthesis; L-lysine biosynthesis via DAP pathway; DL-2,6-diaminopimelate from LL-2,6-diaminopimelate: step 1/1. Catalyzes the stereoinversion of LL-2,6-diaminopimelate (L,L-DAP) to meso-diaminopimelate (meso-DAP), a precursor of L-lysine and an essential component of the bacterial peptidoglycan. This Bacillus subtilis (strain 168) protein is Diaminopimelate epimerase.